The following is a 420-amino-acid chain: Histidine--tRNA ligase (420 aa).

This sequence belongs to the class-II aminoacyl-tRNA synthetase family. As to quaternary structure, homodimer.

The protein resides in the cytoplasm. It carries out the reaction tRNA(His) + L-histidine + ATP = L-histidyl-tRNA(His) + AMP + diphosphate + H(+). The chain is Histidine--tRNA ligase from Thermodesulfovibrio yellowstonii (strain ATCC 51303 / DSM 11347 / YP87).